The primary structure comprises 371 residues: Glutamate 5-kinase (371 aa).

Lys10 contacts ATP. Substrate-binding residues include Ser50, Asp137, and Asn149. ATP-binding positions include 169 to 170 (SD) and 208 to 214 (TGGMFTK). In terms of domain architecture, PUA spans 274–352 (EGRIYIDDGA…EEIRNILGED (79 aa)).

Belongs to the glutamate 5-kinase family.

The protein localises to the cytoplasm. The catalysed reaction is L-glutamate + ATP = L-glutamyl 5-phosphate + ADP. The protein operates within amino-acid biosynthesis; L-proline biosynthesis; L-glutamate 5-semialdehyde from L-glutamate: step 1/2. In terms of biological role, catalyzes the transfer of a phosphate group to glutamate to form L-glutamate 5-phosphate. In Dictyoglomus turgidum (strain DSM 6724 / Z-1310), this protein is Glutamate 5-kinase.